The following is a 299-amino-acid chain: Homoserine kinase (299 aa).

84–94 (PISRGLGSSSA) serves as a coordination point for ATP.

It belongs to the GHMP kinase family. Homoserine kinase subfamily.

The protein resides in the cytoplasm. The enzyme catalyses L-homoserine + ATP = O-phospho-L-homoserine + ADP + H(+). It participates in amino-acid biosynthesis; L-threonine biosynthesis; L-threonine from L-aspartate: step 4/5. Its function is as follows. Catalyzes the ATP-dependent phosphorylation of L-homoserine to L-homoserine phosphate. In Helicobacter hepaticus (strain ATCC 51449 / 3B1), this protein is Homoserine kinase.